An 821-amino-acid polypeptide reads, in one-letter code: Leucine--tRNA ligase (821 aa).

Residues 42-52 carry the 'HIGH' region motif; the sequence is PYPSGKLHMGH. The 'KMSKS' region motif lies at 583 to 587; sequence KMSKS. Lys586 lines the ATP pocket.

It belongs to the class-I aminoacyl-tRNA synthetase family.

It localises to the cytoplasm. The enzyme catalyses tRNA(Leu) + L-leucine + ATP = L-leucyl-tRNA(Leu) + AMP + diphosphate. The sequence is that of Leucine--tRNA ligase from Carboxydothermus hydrogenoformans (strain ATCC BAA-161 / DSM 6008 / Z-2901).